Here is a 365-residue protein sequence, read N- to C-terminus: UDP-N-acetylglucosamine--N-acetylmuramyl-(pentapeptide) pyrophosphoryl-undecaprenol N-acetylglucosamine transferase (365 aa).

UDP-N-acetyl-alpha-D-glucosamine-binding positions include 11–13 (TGG), asparagine 124, arginine 165, serine 192, isoleucine 246, and glutamine 291.

It belongs to the glycosyltransferase 28 family. MurG subfamily.

The protein resides in the cell inner membrane. It catalyses the reaction di-trans,octa-cis-undecaprenyl diphospho-N-acetyl-alpha-D-muramoyl-L-alanyl-D-glutamyl-meso-2,6-diaminopimeloyl-D-alanyl-D-alanine + UDP-N-acetyl-alpha-D-glucosamine = di-trans,octa-cis-undecaprenyl diphospho-[N-acetyl-alpha-D-glucosaminyl-(1-&gt;4)]-N-acetyl-alpha-D-muramoyl-L-alanyl-D-glutamyl-meso-2,6-diaminopimeloyl-D-alanyl-D-alanine + UDP + H(+). It participates in cell wall biogenesis; peptidoglycan biosynthesis. Functionally, cell wall formation. Catalyzes the transfer of a GlcNAc subunit on undecaprenyl-pyrophosphoryl-MurNAc-pentapeptide (lipid intermediate I) to form undecaprenyl-pyrophosphoryl-MurNAc-(pentapeptide)GlcNAc (lipid intermediate II). This Nitratidesulfovibrio vulgaris (strain ATCC 29579 / DSM 644 / CCUG 34227 / NCIMB 8303 / VKM B-1760 / Hildenborough) (Desulfovibrio vulgaris) protein is UDP-N-acetylglucosamine--N-acetylmuramyl-(pentapeptide) pyrophosphoryl-undecaprenol N-acetylglucosamine transferase.